A 50-amino-acid chain; its full sequence is Toxic protein HokE (50 aa).

The chain crosses the membrane as a helical span at residues 5–25 (YALAAVIVLCLTVLGFTLLVG).

The protein belongs to the Hok/Gef family.

It is found in the cell inner membrane. Its function is as follows. Toxic component of a type I toxin-antitoxin (TA) system; if it expressed it could be neutralized by antisense antitoxin RNA SokE. This is Toxic protein HokE from Escherichia coli (strain K12).